The primary structure comprises 127 residues: uncharacterized protein (127 aa).

Residues 91–113 (IYLIVSIAVSILAIIAFFIFLML) traverse the membrane as a helical segment.

It localises to the membrane. This is an uncharacterized protein from Bacillus subtilis (strain 168).